Here is a 1740-residue protein sequence, read N- to C-terminus: DNA polymerase (1740 aa).

The tract at residues 472–491 is disordered; sequence IEMPHNQEDSDSEKEDEDTD. Acidic residues predominate over residues 480–491; sequence DSDSEKEDEDTD. In terms of domain architecture, DOD-type homing endonuclease spans 1189–1334; it reads VWGFFMGDGS…LFYLLKSLGY (146 aa). Positions 1673 to 1701 are disordered; that stretch reads PKESGSKTAKKPYQSQKLQKTKSSNKSQI. Residues 1685 to 1700 are compositionally biased toward polar residues; the sequence is YQSQKLQKTKSSNKSQ.

Belongs to the DNA polymerase type-B family. Post-translationally, this protein undergoes a protein self splicing that involves a post-translational excision of the intervening region (intein) followed by peptide ligation.

It catalyses the reaction DNA(n) + a 2'-deoxyribonucleoside 5'-triphosphate = DNA(n+1) + diphosphate. This chain is DNA polymerase (POLB), found in Acanthamoeba polyphaga (Amoeba).